Consider the following 286-residue polypeptide: Shikimate dehydrogenase (NADP(+)) (286 aa).

Residues 19–21 and Thr66 contribute to the shikimate site; that span reads SVS. The active-site Proton acceptor is Lys70. Shikimate contacts are provided by Asn91 and Asp106. Residues 130-134 and Ala225 each bind NADP(+); that span reads GAGGS. Position 227 (Tyr227) interacts with shikimate. NADP(+) is bound at residue Gly248.

The protein belongs to the shikimate dehydrogenase family. In terms of assembly, homodimer.

It catalyses the reaction shikimate + NADP(+) = 3-dehydroshikimate + NADPH + H(+). The protein operates within metabolic intermediate biosynthesis; chorismate biosynthesis; chorismate from D-erythrose 4-phosphate and phosphoenolpyruvate: step 4/7. Involved in the biosynthesis of the chorismate, which leads to the biosynthesis of aromatic amino acids. Catalyzes the reversible NADPH linked reduction of 3-dehydroshikimate (DHSA) to yield shikimate (SA). The protein is Shikimate dehydrogenase (NADP(+)) of Dehalococcoides mccartyi (strain ATCC BAA-2100 / JCM 16839 / KCTC 5957 / BAV1).